A 261-amino-acid chain; its full sequence is Undecaprenyl-diphosphatase 2 (261 aa).

8 helical membrane-spanning segments follow: residues 1–21, 38–58, 75–95, 103–123, 138–158, 178–198, 212–232, and 240–260; these read MLEA…PISS, PGKT…CVVF, FAFA…GATL, LESP…ILVI, MSPA…VPGV, AAEF…AYSL, LIAL…KGFI, and FAPF…LILM.

It belongs to the UppP family.

It localises to the cell inner membrane. It catalyses the reaction di-trans,octa-cis-undecaprenyl diphosphate + H2O = di-trans,octa-cis-undecaprenyl phosphate + phosphate + H(+). Catalyzes the dephosphorylation of undecaprenyl diphosphate (UPP). Confers resistance to bacitracin. This Paramagnetospirillum magneticum (strain ATCC 700264 / AMB-1) (Magnetospirillum magneticum) protein is Undecaprenyl-diphosphatase 2.